We begin with the raw amino-acid sequence, 370 residues long: 3-dehydroquinate synthase (370 aa).

NAD(+) contacts are provided by residues 108–112, 132–133, Lys145, and Lys154; these read GVIGD and TT. Positions 187, 249, and 267 each coordinate Zn(2+).

The protein belongs to the sugar phosphate cyclases superfamily. Dehydroquinate synthase family. Co(2+) is required as a cofactor. It depends on Zn(2+) as a cofactor. NAD(+) serves as cofactor.

The protein localises to the cytoplasm. The catalysed reaction is 7-phospho-2-dehydro-3-deoxy-D-arabino-heptonate = 3-dehydroquinate + phosphate. It functions in the pathway metabolic intermediate biosynthesis; chorismate biosynthesis; chorismate from D-erythrose 4-phosphate and phosphoenolpyruvate: step 2/7. Its function is as follows. Catalyzes the conversion of 3-deoxy-D-arabino-heptulosonate 7-phosphate (DAHP) to dehydroquinate (DHQ). This Cereibacter sphaeroides (strain ATCC 17025 / ATH 2.4.3) (Rhodobacter sphaeroides) protein is 3-dehydroquinate synthase.